We begin with the raw amino-acid sequence, 237 residues long: Ribosomal RNA small subunit methyltransferase G (237 aa).

Residues Gly-78, Phe-83, 129–130, and Arg-146 each bind S-adenosyl-L-methionine; that span reads AE.

The protein belongs to the methyltransferase superfamily. RNA methyltransferase RsmG family.

It localises to the cytoplasm. Specifically methylates the N7 position of a guanine in 16S rRNA. This chain is Ribosomal RNA small subunit methyltransferase G, found in Mesoplasma florum (strain ATCC 33453 / NBRC 100688 / NCTC 11704 / L1) (Acholeplasma florum).